The following is a 337-amino-acid chain: Glyceraldehyde-3-phosphate dehydrogenase (337 aa).

Residues 12–13 (RI), aspartate 34, and arginine 79 each bind NAD(+). Residues 150–152 (SCT), threonine 181, 210–211 (TG), and arginine 233 contribute to the D-glyceraldehyde 3-phosphate site. Cysteine 151 serves as the catalytic Nucleophile. Residue asparagine 315 participates in NAD(+) binding.

The protein belongs to the glyceraldehyde-3-phosphate dehydrogenase family. In terms of assembly, homotetramer.

It is found in the cytoplasm. The catalysed reaction is D-glyceraldehyde 3-phosphate + phosphate + NAD(+) = (2R)-3-phospho-glyceroyl phosphate + NADH + H(+). It functions in the pathway carbohydrate degradation; glycolysis; pyruvate from D-glyceraldehyde 3-phosphate: step 1/5. This Coccidioides immitis (strain RS) (Valley fever fungus) protein is Glyceraldehyde-3-phosphate dehydrogenase (GPD).